We begin with the raw amino-acid sequence, 121 residues long: Nitrogen fixation nifHD region GlnB-like protein 2 (121 aa).

It belongs to the P(II) protein family.

Its function is as follows. Could be involved in the regulation of nitrogen fixation. This is Nitrogen fixation nifHD region GlnB-like protein 2 (glnBB) from Methanothermobacter marburgensis (strain ATCC BAA-927 / DSM 2133 / JCM 14651 / NBRC 100331 / OCM 82 / Marburg) (Methanobacterium thermoautotrophicum).